Consider the following 289-residue polypeptide: Xylosylprotein 4-beta-galactosyltransferase (289 aa).

The Cytoplasmic portion of the chain corresponds to 1-6 (MKLKTR). The chain crosses the membrane as a helical; Signal-anchor for type II membrane protein span at residues 7–27 (LILSGTILISLAACYFLVLLV). Residues 28–289 (LDLEITRDLM…DLNWTPYCKS (262 aa)) are Lumenal-facing. 58–62 (PYRDR) contacts UDP-alpha-D-galactose. Residues Asn-81 and Asn-90 are each glycosylated (N-linked (GlcNAc...) asparagine). Residues 97–99 (FNR), 123–124 (VD), Tyr-154, and Trp-184 contribute to the UDP-alpha-D-galactose site. Asp-124 serves as a coordination point for Mn(2+). Residue 186–189 (LEDD) coordinates N-acetyl-D-glucosamine. Residue Asn-201 is glycosylated (N-linked (GlcNAc...) asparagine). The tract at residues 214 to 236 (NTFRHIHGPKRKRDYTPKKNDKN) is disordered. The segment covering 217–226 (RHIHGPKRKR) has biased composition (basic residues). Residue His-218 participates in Mn(2+) binding. 218–220 (HIH) is a binding site for UDP-alpha-D-galactose. The segment covering 227 to 236 (DYTPKKNDKN) has biased composition (basic and acidic residues).

Belongs to the glycosyltransferase 7 family. Mn(2+) serves as cofactor.

It is found in the membrane. The catalysed reaction is 3-O-(beta-D-xylosyl)-L-seryl-[protein] + UDP-alpha-D-galactose = 3-O-(beta-D-galactosyl-(1-&gt;4)-beta-D-xylosyl)-L-seryl-[protein] + UDP + H(+). Its pathway is protein modification; protein glycosylation. Its function is as follows. Glycosyltransferase required for the biosynthesis of the tetrasaccharide (GlcA-Gal-Gal-Xyl-)Ser core linker of heparan sulfate and chondroitin sulfate. Required for embryonic development. Involved in vulval epithelium invagination. Required for axon regeneration after injury. In Caenorhabditis elegans, this protein is Xylosylprotein 4-beta-galactosyltransferase (sqv-3).